The following is an 88-amino-acid chain: Small ribosomal subunit protein uS19 (88 aa).

The protein belongs to the universal ribosomal protein uS19 family.

Its function is as follows. Protein S19 forms a complex with S13 that binds strongly to the 16S ribosomal RNA. This Carsonella ruddii (strain PV) protein is Small ribosomal subunit protein uS19.